Consider the following 62-residue polypeptide: uncharacterized protein (62 aa).

This is an uncharacterized protein from Sulfolobus islandicus filamentous virus (isolate Iceland/Hveragerdi) (SIFV).